The sequence spans 405 residues: Probable tRNA sulfurtransferase (405 aa).

A THUMP domain is found at 60 to 165 (DKVMGRLKLV…LNGIFLSSET (106 aa)). ATP is bound by residues 183–184 (ML), 208–209 (HF), arginine 265, glycine 287, and glutamine 296.

The protein belongs to the ThiI family.

It is found in the cytoplasm. The catalysed reaction is [ThiI sulfur-carrier protein]-S-sulfanyl-L-cysteine + a uridine in tRNA + 2 reduced [2Fe-2S]-[ferredoxin] + ATP + H(+) = [ThiI sulfur-carrier protein]-L-cysteine + a 4-thiouridine in tRNA + 2 oxidized [2Fe-2S]-[ferredoxin] + AMP + diphosphate. It catalyses the reaction [ThiS sulfur-carrier protein]-C-terminal Gly-Gly-AMP + S-sulfanyl-L-cysteinyl-[cysteine desulfurase] + AH2 = [ThiS sulfur-carrier protein]-C-terminal-Gly-aminoethanethioate + L-cysteinyl-[cysteine desulfurase] + A + AMP + 2 H(+). Its pathway is cofactor biosynthesis; thiamine diphosphate biosynthesis. Functionally, catalyzes the ATP-dependent transfer of a sulfur to tRNA to produce 4-thiouridine in position 8 of tRNAs, which functions as a near-UV photosensor. Also catalyzes the transfer of sulfur to the sulfur carrier protein ThiS, forming ThiS-thiocarboxylate. This is a step in the synthesis of thiazole, in the thiamine biosynthesis pathway. The sulfur is donated as persulfide by IscS. This is Probable tRNA sulfurtransferase from Lactiplantibacillus plantarum (strain ATCC BAA-793 / NCIMB 8826 / WCFS1) (Lactobacillus plantarum).